Reading from the N-terminus, the 97-residue chain is Small ribosomal subunit protein bS20 (97 aa).

Residues 1-22 form a disordered region; it reads MANSKSALKRIRTSERNRLRNK.

The protein belongs to the bacterial ribosomal protein bS20 family.

Binds directly to 16S ribosomal RNA. This Crocosphaera subtropica (strain ATCC 51142 / BH68) (Cyanothece sp. (strain ATCC 51142)) protein is Small ribosomal subunit protein bS20.